A 234-amino-acid chain; its full sequence is 2-C-methyl-D-erythritol 4-phosphate cytidylyltransferase (234 aa).

The protein belongs to the IspD/TarI cytidylyltransferase family. IspD subfamily.

The catalysed reaction is 2-C-methyl-D-erythritol 4-phosphate + CTP + H(+) = 4-CDP-2-C-methyl-D-erythritol + diphosphate. It functions in the pathway isoprenoid biosynthesis; isopentenyl diphosphate biosynthesis via DXP pathway; isopentenyl diphosphate from 1-deoxy-D-xylulose 5-phosphate: step 2/6. Its function is as follows. Catalyzes the formation of 4-diphosphocytidyl-2-C-methyl-D-erythritol from CTP and 2-C-methyl-D-erythritol 4-phosphate (MEP). In Pseudomonas aeruginosa (strain UCBPP-PA14), this protein is 2-C-methyl-D-erythritol 4-phosphate cytidylyltransferase.